A 408-amino-acid chain; its full sequence is Ubiquitin-associated domain-containing protein 1 (408 aa).

The Ubiquitin-like domain occupies 14-98 (LRLQVCTMEG…LLLIKKRAPP (85 aa)). Positions 100–119 (LPKMADVSAEEKRKQEQKAP) are disordered. Over residues 108 to 119 (AEEKRKQEQKAP) the composition is skewed to basic and acidic residues. The region spanning 185–231 (DEDEEDRVDEIALRQLTEMGFPESRAVKALRLNHMSVTQAMEWLIEH) is the UBA 1 domain. Residues 235-275 (PAVDAPLPGQTPSEAAAEAGASSAEATAGPSSEAGGEEAKD) form a disordered region. Over residues 245–268 (TPSEAAAEAGASSAEATAGPSSEA) the composition is skewed to low complexity. Positions 291–331 (RPDPRAVIALMEMGFDEKEVVDALRVNNNQQNAACEWLLGD) constitute a UBA 2 domain. Residues 356–395 (NPVVQLGLTNPKTLLAFEDMLENPLNSTQWMNDPETGPVM) form the STI1 domain.

As to quaternary structure, component of the KPC complex.

It is found in the cytoplasm. The protein operates within protein modification; protein ubiquitination. Non-catalytic component of the KPC complex, a E3 ubiquitin-protein ligase complex that mediates polyubiquitination of target proteins, such as CDKN1B and NFKB1. Within the KPC complex, UBAC1 acts as an adapter that promotes the transfer of target proteins that have been polyubiquitinated by RNF123/KPC1 to the 26S proteasome. The sequence is that of Ubiquitin-associated domain-containing protein 1 (UBAC1) from Gallus gallus (Chicken).